The primary structure comprises 336 residues: MIQKNWQELIKPNKVEFTSSGRTKATLVAEPLERGFGLTLGNALRRVLLSSLRGAAVTAVQIDGVLHEFSSIPGVREDVTDIVLNIKEIAIKMDGDDAKRMVVRKQGPGVVTAGDIQTVGDIEILNPEHVICTLDEGAEIRMEFTVNNGKGYVPAERNRAEDAPIGLIPVDSLYSPVKKVSYKVENTREGQVLDYDKLSMSIETDGSITGEDAVAFAARILQDQLGVFVNFDEPQKEAEEEAVTELAFNPALLKKVDELELSVRSANCLKNDNIVYIGDLIQKTEAEMLRTPNFGRKSLNEIKEVLASMGLHLGMEVPAWPPENIEDLAKRYEDQY.

The tract at residues 1 to 232 is alpha N-terminal domain (alpha-NTD); sequence MIQKNWQELI…DQLGVFVNFD (232 aa). Positions 248–336 are alpha C-terminal domain (alpha-CTD); it reads FNPALLKKVD…DLAKRYEDQY (89 aa).

This sequence belongs to the RNA polymerase alpha chain family. In terms of assembly, homodimer. The RNAP catalytic core consists of 2 alpha, 1 beta, 1 beta' and 1 omega subunit. When a sigma factor is associated with the core the holoenzyme is formed, which can initiate transcription.

It carries out the reaction RNA(n) + a ribonucleoside 5'-triphosphate = RNA(n+1) + diphosphate. Functionally, DNA-dependent RNA polymerase catalyzes the transcription of DNA into RNA using the four ribonucleoside triphosphates as substrates. The sequence is that of DNA-directed RNA polymerase subunit alpha from Rhizobium rhizogenes (strain K84 / ATCC BAA-868) (Agrobacterium radiobacter).